A 426-amino-acid polypeptide reads, in one-letter code: MGITARKVLGTPYANGAKLMFLGAGELGKETMIEAQRMGIEIVAVDRYANSPGMQVAHRSYVTNMKSERALLAIVEKEKPDAIIPEIEAINTDTLFKLEKEGFFVAPCANAVWTAMHRERLREAIASTGARTSKYEYATDLESFKAACKKIGFPCVSKPIMSSSGKGSYVLKSSKDVEKAFKEAAKARGSSDKIIVEEFIDFDVEITALSVRYLNGKGKPESKFVRPLGHYQIEGDYHASWHPWTDATDKKIDKLEKEIYDYAGRIMDKLGGYGLFAHEMFVDTKNGKVYANETACRPHDTGLVTIASMPFGYSEFALHAKAVLGIPIACEGKVIQPRSTAASHVILSHTEGWYPQFKVDGAYAPDTNVLIFGKPEAYEERRLGVVLATAGTVEDAKKKAQKAAHTVKVSANDKWAGQEITEKHYR.

Residues 26–27 (EL) and Glu-86 contribute to the N(1)-(5-phospho-beta-D-ribosyl)glycinamide site. ATP contacts are provided by residues Arg-118, Lys-158, 197 to 200 (EEFI), and Glu-205. One can recognise an ATP-grasp domain in the interval 123 to 324 (EAIASTGART…EFALHAKAVL (202 aa)). Glu-279 and Glu-293 together coordinate Mg(2+). N(1)-(5-phospho-beta-D-ribosyl)glycinamide-binding positions include Asp-300, Lys-374, and 381–382 (RR).

This sequence belongs to the PurK/PurT family. As to quaternary structure, homodimer.

The catalysed reaction is N(1)-(5-phospho-beta-D-ribosyl)glycinamide + formate + ATP = N(2)-formyl-N(1)-(5-phospho-beta-D-ribosyl)glycinamide + ADP + phosphate + H(+). It functions in the pathway purine metabolism; IMP biosynthesis via de novo pathway; N(2)-formyl-N(1)-(5-phospho-D-ribosyl)glycinamide from N(1)-(5-phospho-D-ribosyl)glycinamide (formate route): step 1/1. Functionally, involved in the de novo purine biosynthesis. Catalyzes the transfer of formate to 5-phospho-ribosyl-glycinamide (GAR), producing 5-phospho-ribosyl-N-formylglycinamide (FGAR). Formate is provided by PurU via hydrolysis of 10-formyl-tetrahydrofolate. The chain is Formate-dependent phosphoribosylglycinamide formyltransferase from Methanocella arvoryzae (strain DSM 22066 / NBRC 105507 / MRE50).